Reading from the N-terminus, the 76-residue chain is Esculentin-2SN1 (76 aa).

An N-terminal signal peptide occupies residues 1–22 (MFTMKKSLLFLFFLGTISLSLC). A propeptide spanning residues 23–37 (EQERGADEDDGGEEV) is cleaved from the precursor. A disulfide bridge links Cys70 with Cys76.

It belongs to the frog skin active peptide (FSAP) family. Esculentin subfamily. Expressed by the skin glands.

The protein resides in the secreted. Its function is as follows. Antimicrobial peptide. Active against some Gram-negative and a variety of Gram-positive bacterial strains. Not active against fungi. Shows very weak hemolytic activity against human erythrocytes. The protein is Esculentin-2SN1 of Sylvirana spinulosa (Fine-spined frog).